The sequence spans 408 residues: UDP-N-acetylglucosamine--N-acetylmuramyl-(pentapeptide) pyrophosphoryl-undecaprenol N-acetylglucosamine transferase (408 aa).

Positions 1 to 20 (MNDTVKKPTGGRGDDPLPAG) are disordered. Residues 41–43 (TAG), Asn160, Arg197, Ser231, and Gln327 contribute to the UDP-N-acetyl-alpha-D-glucosamine site.

It belongs to the glycosyltransferase 28 family. MurG subfamily.

The protein resides in the cell membrane. It catalyses the reaction di-trans,octa-cis-undecaprenyl diphospho-N-acetyl-alpha-D-muramoyl-L-alanyl-D-glutamyl-meso-2,6-diaminopimeloyl-D-alanyl-D-alanine + UDP-N-acetyl-alpha-D-glucosamine = di-trans,octa-cis-undecaprenyl diphospho-[N-acetyl-alpha-D-glucosaminyl-(1-&gt;4)]-N-acetyl-alpha-D-muramoyl-L-alanyl-D-glutamyl-meso-2,6-diaminopimeloyl-D-alanyl-D-alanine + UDP + H(+). Its pathway is cell wall biogenesis; peptidoglycan biosynthesis. Cell wall formation. Catalyzes the transfer of a GlcNAc subunit on undecaprenyl-pyrophosphoryl-MurNAc-pentapeptide (lipid intermediate I) to form undecaprenyl-pyrophosphoryl-MurNAc-(pentapeptide)GlcNAc (lipid intermediate II). The polypeptide is UDP-N-acetylglucosamine--N-acetylmuramyl-(pentapeptide) pyrophosphoryl-undecaprenol N-acetylglucosamine transferase (Mycobacterium avium (strain 104)).